Reading from the N-terminus, the 482-residue chain is Cardiolipin synthase (482 aa).

A run of 2 helical transmembrane segments spans residues 4–24 (LAYLLVVLLILNVFFAAVTVF) and 34–54 (WAWLLVLTFVPIFGFIIYLIF). PLD phosphodiesterase domains are found at residues 217 to 244 (LNYRNHRKLAIIDGDISYIGGFNIGDEY) and 395 to 422 (DNGFIHAKTLVVDGEIASVGTANMDFRS). Active-site residues include His-222, Lys-224, Asp-229, His-400, Lys-402, and Asp-407.

Belongs to the phospholipase D family. Cardiolipin synthase subfamily.

The protein localises to the cell membrane. It carries out the reaction 2 a 1,2-diacyl-sn-glycero-3-phospho-(1'-sn-glycerol) = a cardiolipin + glycerol. Functionally, catalyzes the reversible phosphatidyl group transfer from one phosphatidylglycerol molecule to another to form cardiolipin (CL) (diphosphatidylglycerol) and glycerol. This is Cardiolipin synthase (cls) from Listeria welshimeri serovar 6b (strain ATCC 35897 / DSM 20650 / CCUG 15529 / CIP 8149 / NCTC 11857 / SLCC 5334 / V8).